A 510-amino-acid polypeptide reads, in one-letter code: 2,3-bisphosphoglycerate-independent phosphoglycerate mutase (510 aa).

Mn(2+) contacts are provided by aspartate 13 and serine 63. Serine 63 serves as the catalytic Phosphoserine intermediate. Substrate contacts are provided by residues histidine 124, 154 to 155, arginine 186, arginine 192, 262 to 265, and lysine 334; these read RD and RADR. Aspartate 401, histidine 405, aspartate 442, histidine 443, and histidine 461 together coordinate Mn(2+).

It belongs to the BPG-independent phosphoglycerate mutase family. In terms of assembly, monomer. Requires Mn(2+) as cofactor.

The catalysed reaction is (2R)-2-phosphoglycerate = (2R)-3-phosphoglycerate. The protein operates within carbohydrate degradation; glycolysis; pyruvate from D-glyceraldehyde 3-phosphate: step 3/5. Its function is as follows. Catalyzes the interconversion of 2-phosphoglycerate and 3-phosphoglycerate. The polypeptide is 2,3-bisphosphoglycerate-independent phosphoglycerate mutase (Vibrio cholerae serotype O1 (strain ATCC 39541 / Classical Ogawa 395 / O395)).